The sequence spans 807 residues: MRRCGIYVYPHRERDILCVKIWTIHLGSWGNPMPNRACVQKVLPVTKQISSDGSVQIDTVRAVLPEFQFPSHPQIGDCLSWIETFFSRSLVGFYDQGYTPGEESCTNSTIKGMSGKPTSIISNIYTTTGPAKVSNDYAVRDPGVAVDHFDQYGPLKEGRSLNSAKISTQWSGSATLKSSNRSIFNIGLGYINTFLGVSNVRGFSTGSGRSKNVLNKLDDLSKRSKNYPNLVIDRNLYKDFLLNRDMFLIAYNKLKSNPGMMTHGLKPDTLDGMSIDVIDKIIQSLKSEEFNFTPGRRILIDKASGGKRPLTIGSPRDKLVQEILRIVLEAIYEPLFNTASHGFRPGRSCHSALRSIFTNFKGCTWWIEGDIKACFDSIPHDKLIALLSSKIKDQRFIQLIRKALNAGYLTENRYKYDIVGTPQGSIVSPILANIYLHQLDEFIENLKSEFDYKGPIARKRTSESRHLHYLMAKAKRENADSKTIRKIAIEMRNVPNKIHGIQSNKLMYVRYADDWIVAVNGSYTQTKEILAKITCFCSSIGLTVSPTKTKITNSYTDKILFLGTNISHSKNVTFSRHFGILQRNSGFILLSAPMDRIAKKLRETGLMLNHKGRSVIRWLPLDVRQIIGLANSIIRGYDNYYSFVHNRGRFATYVYFIIKDCVLRTLAHKLSLGTRMKVIKKFGPDLSIYDYNSRDENNKPKLITQLFKPSWKVNVWGFKSDKVKLNIRTLYASHLSMANLENLQCAACQSTYKVEMHHVRQMKNLKPIKGTLDYLMAKANRKQIPLCRSCHMKLHANKLTLNEDKKV.

Residues 281–566 (IIQSLKSEEF…DKILFLGTNI (286 aa)) enclose the Reverse transcriptase domain.

The protein localises to the mitochondrion. This is an uncharacterized protein from Schizosaccharomyces pombe (strain 972 / ATCC 24843) (Fission yeast).